The sequence spans 740 residues: F-BAR and double SH3 domains protein 2 (740 aa).

In terms of domain architecture, F-BAR spans valine 8–asparagine 282. Residues proline 303–serine 323 form a disordered region. Basic and acidic residues predominate over residues aspartate 307–serine 323. Residues glycine 356 to glutamine 397 adopt a coiled-coil conformation. 2 SH3 domains span residues asparagine 469–serine 530 and alanine 567–alanine 629. The required and sufficient for location at clathrin-coated pits stretch occupies residues alanine 567–alanine 629. Over residues alanine 629–proline 645 the composition is skewed to polar residues. A disordered region spans residues alanine 629 to valine 740. Residues serine 646–proline 657 are compositionally biased toward pro residues. Phosphoserine is present on residues serine 675 and serine 681. Over residues serine 675 to threonine 706 the composition is skewed to polar residues.

In terms of assembly, homodimer. Interacts (via SH3 domain 2) with ITSN1 (via SH3 domain 4). Recruited to clathrin-coated pits during a mid-to-late stage of assembly via interaction with ITSN1. Interacts (via SH3 domain 1) with WASL. Interacts with WAS. Interacts with CASK and MAGI1. CASK inhibits interaction with MAGI1. Phosphorylated. Phosphorylation on a Ser residue is important for recruitment to the cell membrane and for its role in promoting endocytosis. As to expression, detected in inner ear vestibula and in stereocilia in cochlear hair cell bundles (at protein level). Ubiquitous. Detected in testis, liver, brain cortex, cerebellum, kidney, organ of Corti, utricle, spiral ganglion, tongue and eye.

The protein localises to the cytoplasm. The protein resides in the cell junction. It localises to the membrane. It is found in the clathrin-coated pit. Its subcellular location is the cell membrane. The protein localises to the cell projection. The protein resides in the stereocilium. Adapter protein that plays a role in endocytosis via clathrin-coated pits. Contributes to the internalization of cell surface receptors, such as integrin ITGB1 and transferrin receptor. Promotes endocytosis of EGFR in cancer cells, and thereby contributes to the down-regulation of EGFR signaling. Recruited to clathrin-coated pits during a mid-to-late stage of assembly, where it is required for normal progress from U-shaped intermediate stage pits to terminal, omega-shaped pits. Binds to membranes enriched in phosphatidylinositol 3,4-bisphosphate or phosphatidylinositol 3,4,5-trisphosphate. When bound to membranes, promotes actin polymerization via its interaction with WAS and/or WASL which leads to the activation of the Arp2/3 complex. Does not promote actin polymerisation in the absence of membranes. The chain is F-BAR and double SH3 domains protein 2 (Fchsd2) from Mus musculus (Mouse).